Reading from the N-terminus, the 318-residue chain is MAAVITLIGATASGKTDLACALYQRFPLRLISVDSAQIYRGMDIGTAKPSAAFLKQYPHDLIDCCEPEEHYSAARFCQDAHQAIAKAHADGKIPLLVGGTMLYYHALFSGLSDLPPADAQLRAEIMAEMHTRGLPALYADLLAYDPEQANKIAANDTQRIIRFTELFRQTGQPPSALFAQQKQAAPTWNSLHLALLPERHLLHQAIAQRFQTMMAAGFLEEVARLKMRPKLTAEHSSMRSVGYRQLWRHLDGEIDLETAVELSIIATRQLAKRQITWLNNRLKTVLSMHFYDPYQAETPNRVFQQVAQFCKHNEGTFL.

G9–T16 lines the ATP pocket. A substrate-binding site is contributed by T11–T16. Interaction with substrate tRNA regions lie at residues D34–Q37 and Q158–R162.

Belongs to the IPP transferase family. As to quaternary structure, monomer. It depends on Mg(2+) as a cofactor.

The catalysed reaction is adenosine(37) in tRNA + dimethylallyl diphosphate = N(6)-dimethylallyladenosine(37) in tRNA + diphosphate. In terms of biological role, catalyzes the transfer of a dimethylallyl group onto the adenine at position 37 in tRNAs that read codons beginning with uridine, leading to the formation of N6-(dimethylallyl)adenosine (i(6)A). This is tRNA dimethylallyltransferase from Dichelobacter nodosus (strain VCS1703A).